A 214-amino-acid chain; its full sequence is Dimethylamine corrinoid protein 2 (214 aa).

One can recognise a B12-binding N-terminal domain in the interval 1–91; it reads MATKEELIQE…DMPAGAATKK (91 aa). The B12-binding domain occupies 92–214; it reads LGVIVNGTVE…AVAKAKELLL (123 aa). A methylcob(III)alamin-binding site is contributed by His105.

Belongs to the methylamine corrinoid protein family.

It participates in one-carbon metabolism; methanogenesis from dimethylamine. Functionally, acts as a methyl group carrier between MtbB and MtbA. The sequence is that of Dimethylamine corrinoid protein 2 (mtbC2) from Methanosarcina mazei (strain ATCC BAA-159 / DSM 3647 / Goe1 / Go1 / JCM 11833 / OCM 88) (Methanosarcina frisia).